The primary structure comprises 632 residues: Phospholipid:diacylglycerol acyltransferase (632 aa).

Over residues 1–15 the composition is skewed to basic residues; it reads MASSKKSKTHKKKKE. The tract at residues 1 to 47 is disordered; that stretch reads MASSKKSKTHKKKKEVKSPIDLPNSKKPTRALSEQPSASETQSVSNK. Over 1–56 the chain is Cytoplasmic; it reads MASSKKSKTHKKKKEVKSPIDLPNSKKPTRALSEQPSASETQSVSNKSRKSKFGKR. The segment covering 32–46 has biased composition (polar residues); the sequence is LSEQPSASETQSVSN. A helical transmembrane segment spans residues 57 to 77; the sequence is LNFILGAILGICGAFFFAVGD. At 78–632 the chain is on the lumenal side; that stretch reads DNAVFDPATL…NEINLDKPRN (555 aa). Substrate is bound at residue aspartate 136. Catalysis depends on serine 293, which acts as the Acyl-ester intermediate. Methionine 294 serves as a coordination point for substrate. Catalysis depends on charge relay system residues aspartate 535 and histidine 586.

This sequence belongs to the AB hydrolase superfamily. Lipase family.

Its subcellular location is the endoplasmic reticulum membrane. It catalyses the reaction a glycerophospholipid + a 1,2-diacyl-sn-glycerol = a monoacylglycerophospholipid + a triacyl-sn-glycerol. The protein operates within glycerolipid metabolism; triacylglycerol biosynthesis. In terms of biological role, catalyzes triacylglycerol (TAG) formation by an acyl-CoA independent pathway. The enzyme specifically transfers acyl groups from the sn-2 position of a phospholipid to diacylglycerol (DAG), thus forming an sn-1-lysophospholipid. Plays a major role in triacylglycerol formation at log phase. Involved in lipid particle synthesis from the endoplasmic reticulum, promoting localized TAG production at discrete ER subdomains. The sequence is that of Phospholipid:diacylglycerol acyltransferase (plh1) from Schizosaccharomyces pombe (strain 972 / ATCC 24843) (Fission yeast).